A 96-amino-acid chain; its full sequence is Cell division protein FtsB (96 aa).

At 1 to 11 (MDIKSNSFFYI) the chain is on the cytoplasmic side. The chain crosses the membrane as a helical span at residues 12–29 (FISVVLLLIAILQYDLWF). Residues 30–96 (SNTGFIKYQA…KQGEVFYSVK (67 aa)) lie on the Periplasmic side of the membrane.

This sequence belongs to the FtsB family. In terms of assembly, part of a complex composed of FtsB, FtsL and FtsQ.

It is found in the cell inner membrane. Essential cell division protein. May link together the upstream cell division proteins, which are predominantly cytoplasmic, with the downstream cell division proteins, which are predominantly periplasmic. The polypeptide is Cell division protein FtsB (Francisella tularensis subsp. tularensis (strain SCHU S4 / Schu 4)).